The sequence spans 458 residues: Argininosuccinate lyase (458 aa).

This sequence belongs to the lyase 1 family. Argininosuccinate lyase subfamily.

The protein resides in the cytoplasm. It carries out the reaction 2-(N(omega)-L-arginino)succinate = fumarate + L-arginine. The protein operates within amino-acid biosynthesis; L-arginine biosynthesis; L-arginine from L-ornithine and carbamoyl phosphate: step 3/3. The sequence is that of Argininosuccinate lyase from Citrifermentans bemidjiense (strain ATCC BAA-1014 / DSM 16622 / JCM 12645 / Bem) (Geobacter bemidjiensis).